A 137-amino-acid polypeptide reads, in one-letter code: Putative pre-16S rRNA nuclease (137 aa).

This sequence belongs to the YqgF nuclease family.

It is found in the cytoplasm. Its function is as follows. Could be a nuclease involved in processing of the 5'-end of pre-16S rRNA. This Clostridium kluyveri (strain NBRC 12016) protein is Putative pre-16S rRNA nuclease.